The chain runs to 418 residues: Gamma-glutamyl phosphate reductase (418 aa).

This sequence belongs to the gamma-glutamyl phosphate reductase family.

It is found in the cytoplasm. The catalysed reaction is L-glutamate 5-semialdehyde + phosphate + NADP(+) = L-glutamyl 5-phosphate + NADPH + H(+). Its pathway is amino-acid biosynthesis; L-proline biosynthesis; L-glutamate 5-semialdehyde from L-glutamate: step 2/2. Catalyzes the NADPH-dependent reduction of L-glutamate 5-phosphate into L-glutamate 5-semialdehyde and phosphate. The product spontaneously undergoes cyclization to form 1-pyrroline-5-carboxylate. In Thermodesulfovibrio yellowstonii (strain ATCC 51303 / DSM 11347 / YP87), this protein is Gamma-glutamyl phosphate reductase.